Here is a 210-residue protein sequence, read N- to C-terminus: Putative 3-methyladenine DNA glycosylase (210 aa).

The protein belongs to the DNA glycosylase MPG family.

The protein is Putative 3-methyladenine DNA glycosylase of Lactobacillus acidophilus (strain ATCC 700396 / NCK56 / N2 / NCFM).